The sequence spans 861 residues: DNA mismatch repair protein MutS (861 aa).

618–625 (GPNMGGKS) lines the ATP pocket.

Belongs to the DNA mismatch repair MutS family.

Its function is as follows. This protein is involved in the repair of mismatches in DNA. It is possible that it carries out the mismatch recognition step. This protein has a weak ATPase activity. This is DNA mismatch repair protein MutS from Shewanella sp. (strain MR-4).